A 340-amino-acid chain; its full sequence is Organic solute transporter subunit alpha (340 aa).

Residues Met-1–Pro-48 lie on the Extracellular side of the membrane. Residues Val-49–Leu-69 form a helical membrane-spanning segment. At Glu-70 to Thr-87 the chain is on the cytoplasmic side. The helical transmembrane segment at Leu-88–Ile-108 threads the bilayer. Residues Pro-109 to Thr-118 lie on the Extracellular side of the membrane. Residues Ile-119–Gly-139 traverse the membrane as a helical segment. The Cytoplasmic segment spans residues Gly-140 to Met-181. The helical transmembrane segment at Leu-182–Val-202 threads the bilayer. Residues Pro-203–Ala-218 are Extracellular-facing. Residues Leu-219 to Ile-239 traverse the membrane as a helical segment. At Ser-240 to Lys-255 the chain is on the cytoplasmic side. The chain crosses the membrane as a helical span at residues Phe-256–Leu-276. Residues Ala-277–Ser-294 lie on the Extracellular side of the membrane. A helical transmembrane segment spans residues Gln-295–Tyr-317. The Cytoplasmic portion of the chain corresponds to Arg-318–Ala-340. Position 330 is a phosphoserine (Ser-330).

The protein belongs to the OST-alpha family. In terms of assembly, interacts with SLC51B. The Ost-alpha/Ost-beta complex is a heterodimer composed of alpha (SLC51A) and beta (SLC51B) subunit. As to expression, widely expressed with a high expression in ileum. Expressed in testis, colon, liver, small intestine, kidney, ovary and adrenal gland; and at low levels in heart, lung, brain, pituitary, thyroid gland, uterus, prostate, mammary gland and fat.

The protein resides in the cell membrane. The protein localises to the endoplasmic reticulum membrane. It carries out the reaction taurocholate(out) = taurocholate(in). It catalyses the reaction estrone 3-sulfate(out) = estrone 3-sulfate(in). The enzyme catalyses dehydroepiandrosterone 3-sulfate(out) = dehydroepiandrosterone 3-sulfate(in). The catalysed reaction is tauroursodeoxycholate(out) = tauroursodeoxycholate(in). It carries out the reaction glycoursodeoxycholate(out) = glycoursodeoxycholate(in). It catalyses the reaction glycocholate(out) = glycocholate(in). The enzyme catalyses taurochenodeoxycholate(out) = taurochenodeoxycholate(in). The catalysed reaction is glycochenodeoxycholate(out) = glycochenodeoxycholate(in). It carries out the reaction taurodeoxycholate(out) = taurodeoxycholate(in). It catalyses the reaction glycodeoxycholate(out) = glycodeoxycholate(in). The enzyme catalyses prostaglandin E2(out) = prostaglandin E2(in). Its function is as follows. Essential component of the Ost-alpha/Ost-beta complex, a heterodimer that acts as the intestinal basolateral transporter responsible for bile acid export from enterocytes into portal blood. Efficiently transports the major species of bile acids (taurocholate). Taurine conjugates are transported more efficiently across the basolateral membrane than glycine-conjugated bile acids. Can also transport steroids such as estrone 3-sulfate and dehydroepiandrosterone 3-sulfate, therefore playing a role in the enterohepatic circulation of sterols. Able to transport eicosanoids such as prostaglandin E2. This is Organic solute transporter subunit alpha (SLC51A) from Homo sapiens (Human).